Here is a 420-residue protein sequence, read N- to C-terminus: ATP-dependent Clp protease ATP-binding subunit ClpX (420 aa).

The ClpX-type ZB domain maps to 4–57 (KTPGNNGKQKLFCSFCGKEQDAVKRLVAGPGVYICDECISLCNEIIAEDHEHSH). Zn(2+)-binding residues include Cys-16, Cys-19, Cys-38, and Cys-41. Residue 122–129 (PTGSGKTL) coordinates ATP.

It belongs to the ClpX chaperone family. In terms of assembly, component of the ClpX-ClpP complex. Forms a hexameric ring that, in the presence of ATP, binds to fourteen ClpP subunits assembled into a disk-like structure with a central cavity, resembling the structure of eukaryotic proteasomes.

In terms of biological role, ATP-dependent specificity component of the Clp protease. It directs the protease to specific substrates. Can perform chaperone functions in the absence of ClpP. This chain is ATP-dependent Clp protease ATP-binding subunit ClpX, found in Leptospira interrogans serogroup Icterohaemorrhagiae serovar copenhageni (strain Fiocruz L1-130).